The chain runs to 106 residues: Thiosulfate sulfurtransferase GlpE (106 aa).

Positions 17-105 constitute a Rhodanese domain; that stretch reads SRGEARLVDI…WHRASLPVEA (89 aa). Catalysis depends on cysteine 65, which acts as the Cysteine persulfide intermediate.

The protein belongs to the GlpE family.

Its subcellular location is the cytoplasm. The enzyme catalyses thiosulfate + hydrogen cyanide = thiocyanate + sulfite + 2 H(+). It catalyses the reaction thiosulfate + [thioredoxin]-dithiol = [thioredoxin]-disulfide + hydrogen sulfide + sulfite + 2 H(+). Transferase that catalyzes the transfer of sulfur from thiosulfate to thiophilic acceptors such as cyanide or dithiols. May function in a CysM-independent thiosulfate assimilation pathway by catalyzing the conversion of thiosulfate to sulfite, which can then be used for L-cysteine biosynthesis. The protein is Thiosulfate sulfurtransferase GlpE of Vibrio vulnificus (strain CMCP6).